The following is a 265-amino-acid chain: Protein Pars_0096 (265 aa).

It belongs to the CinA family.

The sequence is that of Protein Pars_0096 from Pyrobaculum arsenaticum (strain DSM 13514 / JCM 11321 / PZ6).